Consider the following 375-residue polypeptide: 23S rRNA (uracil(747)-C(5))-methyltransferase RlmC (375 aa).

[4Fe-4S] cluster is bound by residues cysteine 3, cysteine 11, cysteine 14, and cysteine 87. Residues glutamine 212, phenylalanine 241, glutamate 262, and asparagine 307 each coordinate S-adenosyl-L-methionine. Cysteine 334 serves as the catalytic Nucleophile.

Belongs to the class I-like SAM-binding methyltransferase superfamily. RNA M5U methyltransferase family. RlmC subfamily.

The catalysed reaction is uridine(747) in 23S rRNA + S-adenosyl-L-methionine = 5-methyluridine(747) in 23S rRNA + S-adenosyl-L-homocysteine + H(+). Its function is as follows. Catalyzes the formation of 5-methyl-uridine at position 747 (m5U747) in 23S rRNA. The chain is 23S rRNA (uracil(747)-C(5))-methyltransferase RlmC from Cronobacter sakazakii (strain ATCC BAA-894) (Enterobacter sakazakii).